Reading from the N-terminus, the 551-residue chain is Protein GZF3 (551 aa).

Positions 17–43 are disordered; it reads DNVFEPKSSENLNSLNQSEEEGHIGRW. The GATA-type zinc finger occupies 131-155; that stretch reads CKNCLTSTTPLWRRDEHGAMLCNAC. Disordered stretches follow at residues 212-260, 379-400, and 467-490; these read GRKA…SATK, LAPTSSRTTDSNPSEVPNQIRS, and SISNSVSSSDVSGRKFENHPAKDL. Residues 228–239 show a composition bias toward polar residues; sequence SQLLMGTSSTAK. Residues 244–254 show a composition bias toward basic and acidic residues; sequence PKTESKERSDS. Residues 388–400 are compositionally biased toward polar residues; the sequence is DSNPSEVPNQIRS. Over residues 467–477 the composition is skewed to low complexity; it reads SISNSVSSSDV. Residues 478-490 show a composition bias toward basic and acidic residues; sequence SGRKFENHPAKDL.

The protein resides in the nucleus. The protein is Protein GZF3 (GZF3) of Saccharomyces cerevisiae (strain ATCC 204508 / S288c) (Baker's yeast).